Reading from the N-terminus, the 399-residue chain is Flavohemoprotein (399 aa).

The 138-residue stretch at 1–138 (MLAEKTRSII…IADIFITVEK (138 aa)) folds into the Globin domain. A Phosphothreonine modification is found at Thr22. Residue His85 participates in heme b binding. Residues Tyr95 and Glu137 each act as charge relay system in the active site. Residues 146 to 399 (WPGWKPFDIT…FGPKMSTVQV (254 aa)) are reductase. The 118-residue stretch at 147–264 (PGWKPFDITA…SAPAGDFAIN (118 aa)) folds into the FAD-binding FR-type domain. Residues Tyr189 and 207 to 210 (RHYS) each bind FAD. Residue 281 to 286 (GVGVTP) participates in NADP(+) binding. 389 to 392 (PFGP) lines the FAD pocket.

The protein belongs to the globin family. Two-domain flavohemoproteins subfamily. This sequence in the C-terminal section; belongs to the flavoprotein pyridine nucleotide cytochrome reductase family. FAD serves as cofactor. The cofactor is heme b.

The protein localises to the cytoplasm. It carries out the reaction 2 nitric oxide + NADPH + 2 O2 = 2 nitrate + NADP(+) + H(+). It catalyses the reaction 2 nitric oxide + NADH + 2 O2 = 2 nitrate + NAD(+) + H(+). In terms of biological role, is involved in NO detoxification in an aerobic process, termed nitric oxide dioxygenase (NOD) reaction that utilizes O(2) and NAD(P)H to convert NO to nitrate, which protects the fungus from various noxious nitrogen compounds. Therefore, plays a central role in the inducible response to nitrosative stress. In the presence of oxygen and NADH, it has NADH oxidase activity, which leads to the generation of superoxide and H(2)O(2). Under anaerobic conditions, it also exhibits nitric oxide reductase and FAD reductase activities. However, all these reactions are much lower than NOD activity. The polypeptide is Flavohemoprotein (YHB1) (Saccharomyces cerevisiae (strain ATCC 204508 / S288c) (Baker's yeast)).